The sequence spans 505 residues: ATP synthase subunit alpha (505 aa).

An ATP-binding site is contributed by 169–176 (GDRKTGKT).

It belongs to the ATPase alpha/beta chains family. F-type ATPases have 2 components, CF(1) - the catalytic core - and CF(0) - the membrane proton channel. CF(1) has five subunits: alpha(3), beta(3), gamma(1), delta(1), epsilon(1). CF(0) has three main subunits: a(1), b(2) and c(9-12). The alpha and beta chains form an alternating ring which encloses part of the gamma chain. CF(1) is attached to CF(0) by a central stalk formed by the gamma and epsilon chains, while a peripheral stalk is formed by the delta and b chains.

The protein resides in the cell membrane. The enzyme catalyses ATP + H2O + 4 H(+)(in) = ADP + phosphate + 5 H(+)(out). In terms of biological role, produces ATP from ADP in the presence of a proton gradient across the membrane. The alpha chain is a regulatory subunit. The protein is ATP synthase subunit alpha of Leuconostoc mesenteroides subsp. mesenteroides (strain ATCC 8293 / DSM 20343 / BCRC 11652 / CCM 1803 / JCM 6124 / NCDO 523 / NBRC 100496 / NCIMB 8023 / NCTC 12954 / NRRL B-1118 / 37Y).